The primary structure comprises 101 residues: Urinary protein 3 (101 aa).

Positions 1-21 are cleaved as a signal peptide; the sequence is MGKHILLLPLGLSLLMSSLLA. Positions 22-99 constitute a UPAR/Ly6 domain; that stretch reads LQCFRCISFD…CSATPFCNMV (78 aa). Cystine bridges form between Cys24/Cys51, Cys27/Cys36, Cys43/Cys70, Cys73/Cys89, and Cys90/Cys96.

The protein localises to the secreted. This chain is Urinary protein 3, found in Rattus norvegicus (Rat).